Reading from the N-terminus, the 298-residue chain is Acetylglutamate kinase (298 aa).

Substrate-binding positions include 67–68 (GG), Arg89, and Asn193.

This sequence belongs to the acetylglutamate kinase family. ArgB subfamily.

It localises to the cytoplasm. The enzyme catalyses N-acetyl-L-glutamate + ATP = N-acetyl-L-glutamyl 5-phosphate + ADP. Its pathway is amino-acid biosynthesis; L-arginine biosynthesis; N(2)-acetyl-L-ornithine from L-glutamate: step 2/4. Catalyzes the ATP-dependent phosphorylation of N-acetyl-L-glutamate. In Desulfitobacterium hafniense (strain DSM 10664 / DCB-2), this protein is Acetylglutamate kinase.